Consider the following 338-residue polypeptide: MFIEEFEIESITSTHLLEVLTREYPEVRSPSIKGAMRWWFRALAGSYFGDDAQKLKEIENQVFGSTKERSRVKISVTPLSSPKRLNLKEFKDKNVGYIWFSINLLGKRGTITHYYPPGSRFRVVLESPSERVIKLATLSLWALVSLGSVGFRSRRGTGSMKIVRASSEVLEDLGLTTEFNSIDEFKDSLKRVLDVTGEILGVKNSETNKSLPSYATLKFSDVEVFGPGKNTWEVLAQFNNSYKEYLRRRIKKYQRIIFGLPRFKLRGVRKDLRRASPLWFGVVEIGGKPYGRIIKFFQSTFHPEVRSKHIVDWNVLSNFDWFISSRLPVTKVWGGWSG.

The protein belongs to the CRISPR system Cmr1 family. In terms of assembly, part of the type III-B Cmr ribonucleoprotein (RNP) complex, an elongated RNP with Cmr2 and Cmr3 as the base, with Cmr4 and Cmr5 forming a helical core along the mature crRNA (39 or 45 nt in length), while the complex is capped by Cmr6 and Cmr1. The 5' end of the crRNA is bound to Cmr2 and Cmr3, while Cmr6 and a Cmr1 subunit (Cmr1-1 or Cmr1-2) cap the 3' end of the crRNA. The target RNA lies antiparallel to the crRNA, with its 5' end near Cmr1 and Cmr6 and its 3' end near Cmr2 and Cmr3; major target cleavage occurs nears the junction of Cmr1/Cmr6 and Cmr4/Cmr, with minor cleavage occurring at 6 nt intervals which coincide with the proposed spacing of Cmr4 subunits.

The protein resides in the cytoplasm. In terms of biological role, CRISPR (clustered regularly interspaced short palindromic repeat), is an adaptive immune system that provides protection against mobile genetic elements (viruses, transposable elements and conjugative plasmids). CRISPR clusters contain sequences complementary to antecedent mobile elements and target invading nucleic acids. CRISPR clusters are transcribed and processed into CRISPR RNA (crRNA), formerly called psiRNA (prokaryotic silencing) in this organism. Part of the Cmr ribonucleoprotein complex which has divalent cation-dependent endoribonuclease activity specific for ssRNA complementary to the crRNA (target RNA), generating 5' hydroxy- and 3' phosphate or 2'-3' cyclic phosphate termini. Cmr4 is probably the subunit that cleaves target RNA. Cmr complex does not cleave ssDNA complementary to the crRNA. Cleavage of invading RNA is guided by the crRNA; substrate cleavage occurs a fixed distance (14 nt) from the 3' end of the crRNA. In vitro reconstitution shows Cmr1-2 and Cmr5 are not absolutely necessary for target cleavage. In Pyrococcus furiosus (strain ATCC 43587 / DSM 3638 / JCM 8422 / Vc1), this protein is CRISPR system Cmr subunit Cmr1-1.